Here is a 566-residue protein sequence, read N- to C-terminus: Phenylalanine--tRNA ligase beta subunit (566 aa).

Residues 287–362 (YFQEEVEFNV…IGEGLSSFNP (76 aa)) form the B5 domain. Residues D340, D346, E349, and D350 each contribute to the Mg(2+) site.

It belongs to the phenylalanyl-tRNA synthetase beta subunit family. Type 2 subfamily. As to quaternary structure, tetramer of two alpha and two beta subunits. Mg(2+) is required as a cofactor.

Its subcellular location is the cytoplasm. The enzyme catalyses tRNA(Phe) + L-phenylalanine + ATP = L-phenylalanyl-tRNA(Phe) + AMP + diphosphate + H(+). The polypeptide is Phenylalanine--tRNA ligase beta subunit (Borreliella burgdorferi (strain ZS7) (Borrelia burgdorferi)).